A 98-amino-acid chain; its full sequence is MATTKYEVTYIIKPDVDEESKKALVENYDKVIADNGGTMVESKDWGKRRFAYEIDKYREGTYHIMTFTADNADAVNEFGRLSKIDNMILRSMTVKLDK.

Belongs to the bacterial ribosomal protein bS6 family.

Functionally, binds together with bS18 to 16S ribosomal RNA. The sequence is that of Small ribosomal subunit protein bS6 from Lactobacillus helveticus (strain DPC 4571).